The sequence spans 722 residues: Polymerase basic protein 2 (722 aa).

As to quaternary structure, the RNA polymerase is composed of three subunits: PB1, PB2 and PA.

It is found in the virion. It localises to the host nucleus. Functionally, involved in transcription initiation and cap-stealing mechanism, in which cellular capped pre-mRNA are used to generate primers for viral transcription. Binds the cap of the target pre-RNA which is subsequently cleaved by PB1. May play a role in genome replication. The polypeptide is Polymerase basic protein 2 (Gadus morhua (Atlantic cod)).